The sequence spans 2813 residues: MSPTRLVRVLLALALILPGKLCTKGTVGRSSMARCSLFGGDFINTFDESMYSFAGDCSYLLAGDCQEHSVSLIGGFQNGKRVSLSVYLGEFFDIHLFVNGTMLQGTQSISMPYASNGLYLEAEAGYYKLSSEAYGFVARIDGNGNFQVLLSDRYFNKTCGLCGNFNIFAEDDFRTQEGTLTSDPYDFANSWALSSGEQRCKRVSPPSSPCNVSSDEVQQVLWEQCQLLKSASVFARCHPLVDPEPFVALCERTLCTCVQGMECPCAVLLEYARACAQQGIVLYGWTDHSVCRPACPAGMEYKECVSPCTRTCQSLHVKEVCQEQCVDGCSCPEGQLLDEGHCVGSAECSCVHAGQRYPPGASLLQDCHTCICRNSLWICSNEECPGECLVTGQSHFKSFDNRYFTFSGVCHYLLAQDCQDHTFSVVIETVQCADDLDAVCTRSVTVRLPGHHNSLVKLKHGGGVSMDGQDIQIPLLQGDLRIQHTVMASVRLSYGEDLQMDWDGRGRLLVTLSPAYAGKTCGLCGNYNGNRGDDFVTPAGLAEPLVEDFGNAWKLLGACENLQKQHRDPCSLNPRQARFAEEACALLTSSKFEPCHRAVGPQPYVQNCRYDVCSCSDGRDCLCSAVANYAAACARRGVHIAWREPGFCALSCPQGQVYLQCGTPCNMTCRSLSYPEEDCNEVCLEGCFCPPGLYLDERGDCVPKAQCPCYYDGEIFQPEDIFSDHHTMCYCEDGFMHCTTSGGLGSLLPNPVLSSPRSHRSKRSLSCRPPMVKLVCPADNPRAEGLECAKTCQNYDLQCMSTGCVSGCLCPQGMVRHENRCVALERCPCFHQGQEYAPGETVKIDCNTCVCRDRKWNCTDHVCDATCSAIGMAHYLTFDGLKYLFPGECQYVLVQDYCGSNPGTFRILVGNEGCSYPSVKCKKRVTILVEGGEIELFDGEVNVKKPMKDETHFEVVESGQYVILLLGKALSVVWDHRLSISVTLKRTYQEQVCGLCGNFDGIQNNDFTSSSLQIEEDPVDFGNSWKVNPQCADTKKVPLDSSPAVCHNNIMKQTMVDSSCRILTSDIFQDCNRLVDPEPFLDICIYDTCSCESIGDCTCFCDTIAAYAHVCAQHGKVVAWRTATFCPQNCEERNLHENGYECEWRYNSCAPACPITCQHPEPLACPVQCVEGCHAHCPPGKILDELLQTCIDPEDCPVCEVAGRRLAPGKKIILNPSDPEHCQICHCDGVNFTCQACREPGSLVVPPTEGPIGSTTSYVEDTPEPPLHDFHCSRLLDLVFLLDGSSKLSEDEFEVLKVFVVGMMEHLHISQKRIRVAVVEYHDGSHAYIELKDRKRPSELRRITSQVKYAGSEVASTSEVLKYTLFQIFGKIDRPEASRIALLLMASQEPSRLARNLVRYVQGLKKKKVIVIPVGIGPHASLKQIHLIEKQAPENKAFVFSGVDELEQRRDEIINYLCDLAPEAPAPTQHPPMAQVTVGSELLGVSSPGPKRNSMVLDVVFVLEGSDKIGEANFNKSREFMEEVIQRMDVGQDRIHVTVLQYSYMVTVEYTFSEAQSKGEVLQQVRDIRYRGGNRTNTGLALQYLSEHSFSVSQGDREQVPNLVYMVTGNPASDEIKRMPGDIQVVPIGVGPHANVQELEKIGWPNAPILIHDFEMLPREAPDLVLQRCCSGEGLQIPTLSPTPDCSQPLDVVLLLDGSSSIPASYFDEMKSFTKAFISRANIGPRLTQVSVLQYGSITTIDVPWNVAYEKVHLLSLVDLMQQEGGPSQIGDALSFAVRYVTSEVHGARPGASKAVVILVTDVSVDSVDAAAEAARSNRVTVFPIGIGDRYSEAQLSSLAGPKAGSNMVRLQRIEDLPTVATLGNSFFHKLCSGFDRVCVDEDGNEKRPGDVWTLPDQCHTVTCLPDGQTLLKSHRVNCDRGPRPSCPNGQPPLRVEETCGCRWTCPCVCMGSSTRHIVTFDGQNFKLTGSCSYVLFQNKEQDLEVILHNGACSPGAKETCMKSIEVKHDGLSVELHSDMQMTVNGRLVSIPYVGGDMEVNVYGTIMYEVRFNHLGHIFTFTPQNNEFQLQLSPRTFASKTYGLCGICDENGANDFILRDGTVTTDWKALIQEWTVQQLGKTCQPVPEEQCPVSSSSHCQVLLSELFAECHKVLAPATFYAMCQPDSCHPKKVCEAIALYAHLCRTKGVCVDWRRANFCAMSCPPSLVYNHCEHGCPRLCEGNTSSCGDQPSEGCFCPPNQVMLEGSCVPEEACTQCISEDGVRHQFLETWVPAHQPCQICTCLSGRKVNCTLQPCPTARAPTCGPCEVARLRQNAEQCCPEYECVCDLVSCDLPPVPPCEDGLQMTLTNPGECRPNFTCACRKDECRRESPPSCPPHRTLALRKTQCCDEYECACNCVNSTVSCPLGYLASAVTNDCGCTTTTCFPDKVCVHRGTIYPVGQFWEEACDVCTCTDLEDSVMGLRVAQCSQKPCEDNCLSGFTYVLHEGECCGRCLPSACEVVIGSPRGDAQSHWKNVGSHWASPDNPCLINECVRVKEEVFVQQRNVSCPQLNVPTCPTGFQLSCKTSECCPTCHCEPLEACLLNGTIIGPGKSLMIDVCTTCRCTVQVGVISGFKLECRKTTCEACPLGYKEEKNQGECCGRCLPIACTIQLRGGQIMTLKRDETIQDGCDSHFCKVNERGEYIWEKRVTGCPPFDEHKCLAEGGKIMKIPGTCCDTCEEPECKDIIAKLQRVKVGDCKSEEEVDIHYCEGKCASKAVYSIHMEDVQDQCSCCSPTQTEPMQVPLRCTNGSLIYHEILNAMQCRCSPRKCSK.

The N-terminal stretch at 1–22 (MSPTRLVRVLLALALILPGKLC) is a signal peptide. A propeptide spanning residues 23 to 763 (TKGTVGRSSM…SSPRSHRSKR (741 aa)) is cleaved from the precursor. In terms of domain architecture, VWFD 1 spans 33–201 (ARCSLFGGDF…ALSSGEQRCK (169 aa)). 2 disulfides stabilise this stretch: C35-C162 and C57-C200. N-linked (GlcNAc...) asparagine glycosylation is found at N99, N156, and N211. In terms of domain architecture, TIL 1 spans 295–348 (CPAGMEYKECVSPCTRTCQSLHVKEVCQEQCVDGCSCPEGQLLDEGHCVGSAEC). In terms of domain architecture, VWFD 2 spans 386-560 (GECLVTGQSH…NAWKLLGACE (175 aa)). Intrachain disulfides connect C388-C524, C410-C559, and C432-C440. A Cell attachment site motif is present at residues 531 to 533 (RGD). 2 TIL domains span residues 652 to 707 (CPQG…KAQC) and 776 to 827 (CPAD…LERC). N-linked (GlcNAc...) asparagine glycosylation occurs at N666. Positions 698 to 700 (RGD) match the Cell attachment site motif. An amino-terminal region spans residues 764–787 (SLSCRPPMVKLVCPADNPRAEGLE). 3 disulfides stabilise this stretch: C767-C808, C776-C804, and C810-C821. An E1 region spans residues 788–833 (CAKTCQNYDLQCMSTGCVSGCLCPQGMVRHENRCVALERCPCFHQG). The tract at residues 826 to 853 (RCPCFHQGQEYAPGETVKIDCNTCVCRD) is CX. An N-linked (GlcNAc...) asparagine glycan is attached at N857. The 168-residue stretch at 865 to 1032 (ATCSAIGMAH…NSWKVNPQCA (168 aa)) folds into the VWFD 3 domain. Cystine bridges form between C867–C996, C889–C1031, C898–C993, C914–C921, C1060–C1084, C1071–C1111, C1089–C1091, C1126–C1130, C1149–C1169, C1153–C1165, and C1196–C1199. The TIL 4 domain maps to 1146-1196 (YNSCAPACPITCQHPEPLACPVQCVEGCHAHCPPGKILDELLQTCIDPEDC). N-linked (GlcNAc...) asparagine glycosylation occurs at N1231. 2 disulfides stabilise this stretch: C1234/C1237 and C1272/C1458. VWFA domains are found at residues 1277 to 1453 (DLVF…RDEI) and 1498 to 1665 (DVVF…PDLV). N-linked (GlcNAc...) asparagine glycosylation is found at N1515 and N1574. 8 disulfide bridges follow: C1669-C1670, C1686-C1872, C1879-C1904, C1899-C1940, C1927-C2088, C1950-C2085, C1972-C2123, and C1993-C2001. In terms of domain architecture, VWFA 3 spans 1691-1871 (DVVLLLDGSS…TLGNSFFHKL (181 aa)). In terms of domain architecture, VWFD 4 spans 1948–2124 (CVCMGSSTRH…TVQQLGKTCQ (177 aa)). The E2 stretch occupies residues 2216–2261 (CPRLCEGNTSSCGDQPSEGCFCPPNQVMLEGSCVPEEACTQCISED). N2223, N2290, N2357, and N2400 each carry an N-linked (GlcNAc...) asparagine glycan. A VWFC 1 domain is found at 2255–2328 (TQCISEDGVR…CCPEYECVCD (74 aa)). A VWFC 2 domain is found at 2429–2495 (KVCVHRGTIY…HEGECCGRCL (67 aa)). The short motif at 2507–2509 (RGD) is the Cell attachment site element. N2546 and N2585 each carry an N-linked (GlcNAc...) asparagine glycan. Positions 2580-2645 (EACLLNGTII…NQGECCGRCL (66 aa)) constitute a VWFC 3 domain. Intrachain disulfides connect C2724-C2774, C2739-C2788, C2750-C2804, and C2754-C2806. Positions 2724 to 2812 (CKDIIAKLQR…QCRCSPRKCS (89 aa)) constitute a CTCK domain. N2790 is a glycosylation site (N-linked (GlcNAc...) asparagine).

In terms of assembly, multimeric. Interacts with F8. All cysteine residues are involved in intrachain or interchain disulfide bonds. In terms of processing, N- and O-glycosylated. In terms of tissue distribution, plasma.

Its subcellular location is the secreted. It is found in the extracellular space. It localises to the extracellular matrix. In terms of biological role, important in the maintenance of hemostasis, it promotes adhesion of platelets to the sites of vascular injury by forming a molecular bridge between sub-endothelial collagen matrix and platelet-surface receptor complex, glycoprotein Ibalpha/IX/V. Also acts as a chaperone for coagulation factor VIII, delivering it to the site of injury, stabilizing its heterodimeric structure and protecting it from premature clearance from plasma. In Canis lupus familiaris (Dog), this protein is von Willebrand factor (VWF).